Consider the following 403-residue polypeptide: NADH-quinone oxidoreductase subunit D (403 aa).

The protein belongs to the complex I 49 kDa subunit family. As to quaternary structure, NDH-1 is composed of 14 different subunits. Subunits NuoB, C, D, E, F, and G constitute the peripheral sector of the complex.

The protein resides in the cell inner membrane. It catalyses the reaction a quinone + NADH + 5 H(+)(in) = a quinol + NAD(+) + 4 H(+)(out). In terms of biological role, NDH-1 shuttles electrons from NADH, via FMN and iron-sulfur (Fe-S) centers, to quinones in the respiratory chain. The immediate electron acceptor for the enzyme in this species is believed to be ubiquinone. Couples the redox reaction to proton translocation (for every two electrons transferred, four hydrogen ions are translocated across the cytoplasmic membrane), and thus conserves the redox energy in a proton gradient. The protein is NADH-quinone oxidoreductase subunit D of Pelobacter propionicus (strain DSM 2379 / NBRC 103807 / OttBd1).